Here is a 251-residue protein sequence, read N- to C-terminus: Hydroxyacylglutathione hydrolase (251 aa).

7 residues coordinate Zn(2+): His-53, His-55, Asp-57, His-58, His-110, Asp-127, and His-165.

It belongs to the metallo-beta-lactamase superfamily. Glyoxalase II family. Monomer. The cofactor is Zn(2+).

The enzyme catalyses an S-(2-hydroxyacyl)glutathione + H2O = a 2-hydroxy carboxylate + glutathione + H(+). The protein operates within secondary metabolite metabolism; methylglyoxal degradation; (R)-lactate from methylglyoxal: step 2/2. Its function is as follows. Thiolesterase that catalyzes the hydrolysis of S-D-lactoyl-glutathione to form glutathione and D-lactic acid. The sequence is that of Hydroxyacylglutathione hydrolase from Pectobacterium carotovorum subsp. carotovorum (strain PC1).